We begin with the raw amino-acid sequence, 312 residues long: Malate dehydrogenase (312 aa).

NAD(+)-binding positions include 12–17 and Asp36; that span reads GAGFTG. Arg87 and Arg93 together coordinate substrate. NAD(+) contacts are provided by residues Asn100 and 123–125; that span reads LTN. Residue Asn125 participates in substrate binding. Ser149 is subject to Phosphoserine. Substrate is bound at residue Arg156. His180 serves as the catalytic Proton acceptor.

It belongs to the LDH/MDH superfamily. MDH type 3 family.

It catalyses the reaction (S)-malate + NAD(+) = oxaloacetate + NADH + H(+). Functionally, catalyzes the reversible oxidation of malate to oxaloacetate. The sequence is that of Malate dehydrogenase from Bacillus mycoides (strain KBAB4) (Bacillus weihenstephanensis).